We begin with the raw amino-acid sequence, 663 residues long: MDHRNLDPKTLKVSQLRRVLVENDVAFPANARKPVLVKLFEEKVRQRLQSSPEASKVRTSIQKVVKSGAKNADRKKTLKSKKLESSSSESKTVKDENVETNKRKREQISTDNEAKMQIQEEKSPKKKRKKRSSKANKPPESPPQSKSDGKATSADLTSELETVEELHKKDSSDDKPRVKELPKPELPNLKVSNEFLAQLNKELASAATENYDHSIKSTDLSSIRIETEEPVGPSTGAETRNESEVMENINLEVQPEVKEAKEELTKISETFDNQDEEDTSRLSSKKNIRSPKGRTRHFIANKTKRGIDIMKPFIAHLFIWLWNGAIFLSIICPILFGLWYREQRIQVGYCGHEKPLKSLAISAFPQTERVDSVLQAYRPNCLECPEHGICSSFMNVECEPGYEPKSSILETYGIIPFPKYCAKDESKEKEVDELVWKVNEYLKKKNAQHECGEGENLFESGETETKLYDIFSHSRPSWESQREFNDHWKNVLEILKKKDDIIWLPLDFETNGKREKSKSNNTNYIYRSTSKKWVTLQCHLEGDIQEYITKYGGSLFITLGVLFLIKKIQSTLDNYVQGEQIIEKLVKEAIDKLKDVKKNKGEEPFLTTVQLRATLLSDIPNIKEQNNLWAQTKEKIMKEQSENIELYLLEENGEIMTCWEWKE.

Disordered stretches follow at residues 46 to 188 and 267 to 289; these read QRLQ…ELPN and ISET…KNIR. Over residues 47-62 the composition is skewed to polar residues; sequence RLQSSPEASKVRTSIQ. Positions 91–123 are enriched in basic and acidic residues; it reads KTVKDENVETNKRKREQISTDNEAKMQIQEEKS. Ser123 carries the post-translational modification Phosphoserine. Residues 124–134 are compositionally biased toward basic residues; it reads PKKKRKKRSSK. The short motif at 124-137 is the Nuclear localization signal element; the sequence is PKKKRKKRSSKANK. Over residues 164–183 the composition is skewed to basic and acidic residues; it reads EELHKKDSSDDKPRVKELPK. A helical transmembrane segment spans residues 317 to 337; that stretch reads LFIWLWNGAIFLSIICPILFG.

In terms of assembly, interacts with SRP1.

It is found in the nucleus inner membrane. In Saccharomyces cerevisiae (strain ATCC 204508 / S288c) (Baker's yeast), this protein is Inner nuclear membrane protein HEH2 (HEH2).